A 128-amino-acid polypeptide reads, in one-letter code: Ribonuclease P protein component 4 (128 aa).

Zn(2+) is bound by residues C67, C70, C96, and C99.

It belongs to the eukaryotic/archaeal RNase P protein component 4 family. In terms of assembly, consists of a catalytic RNA component and at least 4-5 protein subunits. Zn(2+) is required as a cofactor.

The protein resides in the cytoplasm. It carries out the reaction Endonucleolytic cleavage of RNA, removing 5'-extranucleotides from tRNA precursor.. In terms of biological role, part of ribonuclease P, a protein complex that generates mature tRNA molecules by cleaving their 5'-ends. This chain is Ribonuclease P protein component 4, found in Methanopyrus kandleri (strain AV19 / DSM 6324 / JCM 9639 / NBRC 100938).